We begin with the raw amino-acid sequence, 521 residues long: Probable methylmalonate-semialdehyde/malonate-semialdehyde dehydrogenase [acylating], mitochondrial (521 aa).

6 residues coordinate NAD(+): A170, F172, K196, E199, R200, and S249. C304 acts as the Nucleophile in catalysis. E404 serves as a coordination point for NAD(+).

This sequence belongs to the aldehyde dehydrogenase family. In terms of assembly, homotetramer.

Its subcellular location is the mitochondrion. It catalyses the reaction 2-methyl-3-oxopropanoate + NAD(+) + CoA + H2O = propanoyl-CoA + hydrogencarbonate + NADH + H(+). The catalysed reaction is 3-oxopropanoate + NAD(+) + CoA + H2O = hydrogencarbonate + acetyl-CoA + NADH + H(+). Its function is as follows. Probable malonate and methylmalonate semialdehyde dehydrogenase involved in the catabolism of valine, thymine, and compounds catabolized by way of beta-alanine, including uracil and cytidine. This chain is Probable methylmalonate-semialdehyde/malonate-semialdehyde dehydrogenase [acylating], mitochondrial, found in Anopheles gambiae (African malaria mosquito).